The following is a 302-amino-acid chain: Segregation and condensation protein A (302 aa).

The protein belongs to the ScpA family. Component of a cohesin-like complex composed of ScpA, ScpB and the Smc homodimer, in which ScpA and ScpB bind to the head domain of Smc. The presence of the three proteins is required for the association of the complex with DNA.

It is found in the cytoplasm. Its function is as follows. Participates in chromosomal partition during cell division. May act via the formation of a condensin-like complex containing Smc and ScpB that pull DNA away from mid-cell into both cell halves. This is Segregation and condensation protein A from Xylella fastidiosa (strain Temecula1 / ATCC 700964).